The chain runs to 161 residues: Ribosome maturation factor RimP (161 aa).

It belongs to the RimP family.

The protein resides in the cytoplasm. Required for maturation of 30S ribosomal subunits. The chain is Ribosome maturation factor RimP from Janthinobacterium sp. (strain Marseille) (Minibacterium massiliensis).